Here is a 77-residue protein sequence, read N- to C-terminus: Acyl carrier protein (77 aa).

The Carrier domain maps to 1–76; the sequence is MSIEERVKKI…SAIDYVAKAN (76 aa). Residue S36 is modified to O-(pantetheine 4'-phosphoryl)serine.

The protein belongs to the acyl carrier protein (ACP) family. Post-translationally, 4'-phosphopantetheine is transferred from CoA to a specific serine of apo-ACP by AcpS. This modification is essential for activity because fatty acids are bound in thioester linkage to the sulfhydryl of the prosthetic group.

It localises to the cytoplasm. The protein operates within lipid metabolism; fatty acid biosynthesis. In terms of biological role, carrier of the growing fatty acid chain in fatty acid biosynthesis. The protein is Acyl carrier protein of Haemophilus ducreyi (strain 35000HP / ATCC 700724).